A 143-amino-acid polypeptide reads, in one-letter code: uncharacterized protein (143 aa).

Positions 5 to 137 constitute an HTH marR-type domain; it reads DARLASDLSL…LRNAADLILE (133 aa). The segment at residues 51-74 is a DNA-binding region (H-T-H motif); it reads PGALAIRERVRPPSMTRVIASLAD.

As to quaternary structure, homodimer.

This is an uncharacterized protein from Mycobacterium leprae (strain TN).